Here is a 101-residue protein sequence, read N- to C-terminus: Small ribosomal subunit protein bS21 (101 aa).

Basic and acidic residues predominate over residues 36 to 52; sequence YEKPSEKKAREKAEAVR. A disordered region spans residues 36-101; the sequence is YEKPSEKKAR…GPGAGPRGPR (66 aa). Residues 53–62 show a composition bias toward basic residues; it reads RARKLARKKL. Positions 83–101 are enriched in gly residues; the sequence is PGAGGPGAGGPGAGPRGPR.

The protein belongs to the bacterial ribosomal protein bS21 family.

The sequence is that of Small ribosomal subunit protein bS21 from Rhodopseudomonas palustris (strain HaA2).